The sequence spans 254 residues: MGAGLVASLLAGTATGLGALPVLVTSELSRKAQGPDVGLQRGRDAGGQSFSLVIPAMELVRGQGHDGPSAALRVAAGVLLGGLFLRVWHDLMPHEHALKGHEGHGGTKWNSALLFVLAMTLHNFPEGLAVGVSFAAPQPELGLSVALGIGAQNIPEGLVVALALRASGASASRAAFLALLTGMVEPVGALFGVLALSLSSALLPWGLAFAGGAMLYVISHEMIPESHRGGFEREATTGLMWGFVLALVLDMSLG.

7 helical membrane passes run glycine 4–valine 24, valine 74–histidine 94, alanine 112–valine 132, leucine 143–alanine 163, phenylalanine 176–leucine 196, leucine 198–isoleucine 218, and glutamate 234–glycine 254. 6 residues coordinate Zn(2+): asparagine 123, glutamate 126, glutamine 152, asparagine 153, glutamate 156, and glutamate 185.

It belongs to the ZIP transporter (TC 2.A.5) family. In terms of assembly, homodimer.

The protein resides in the cell inner membrane. Mediates the uptake of Zn(2+). The chain is Zinc transporter GufA (gufA) from Myxococcus xanthus.